Reading from the N-terminus, the 526-residue chain is Probable feruloyl esterase B-2 (526 aa).

An N-terminal signal peptide occupies residues 1-18 (MTKLSLLPLLALASAVLA). 2 cysteine pairs are disulfide-bonded: Cys27–Cys74 and Cys62–Cys113. Residues Asn52, Asn97, and Asn137 are each glycosylated (N-linked (GlcNAc...) asparagine). 4 cysteine pairs are disulfide-bonded: Cys186–Cys441, Cys255–Cys272, Cys281–Cys291, and Cys503–Cys525. The active-site Acyl-ester intermediate is Ser187. The N-linked (GlcNAc...) asparagine glycan is linked to Asn233. Residues Asp256, Asp259, Ala261, Asp263, and Ile265 each contribute to the Ca(2+) site. Asn311 carries N-linked (GlcNAc...) asparagine glycosylation. Residues Asp400 and His440 each act as charge relay system in the active site. Asn516 is a glycosylation site (N-linked (GlcNAc...) asparagine).

Belongs to the tannase family.

It localises to the secreted. The enzyme catalyses feruloyl-polysaccharide + H2O = ferulate + polysaccharide.. Functionally, involved in degradation of plant cell walls. Hydrolyzes the feruloyl-arabinose ester bond in arabinoxylans as well as the feruloyl-galactose and feruloyl-arabinose ester bonds in pectin. The chain is Probable feruloyl esterase B-2 (faeB-2) from Neosartorya fischeri (strain ATCC 1020 / DSM 3700 / CBS 544.65 / FGSC A1164 / JCM 1740 / NRRL 181 / WB 181) (Aspergillus fischerianus).